We begin with the raw amino-acid sequence, 308 residues long: MQPPGDNAPAGCPFSGAHAAQPAHEAPHVPGDAAGEAGWHDAQLDFSKSMSYGDYLSLNSILDAQHPLSPDHNEMLFIIQHQTSELWMKLALFELRGALDAVRGDALPPAFKMLARVSRILEQLVQAWNVLSTMTPSEYSAMRPYLGQSSGFQSYQYRQLEFLLGNKNVQMLQPHAHRPDILEQVRATLEAPSFYDEVVRLLARRGFPIAPERLERDWTQPMRHDETVEAAWLEVYRHPQQHWELYEMAEELVDLEDAFRQWRFRHVTTVERIIGFKQGTGGTSGAPYLRKMLDVVLFPELWHVRTTL.

The disordered stretch occupies residues 1–35 (MQPPGDNAPAGCPFSGAHAAQPAHEAPHVPGDAAG). Over residues 17–30 (AHAAQPAHEAPHVP) the composition is skewed to low complexity. Residues 77 to 81 (FIIQH), Y139, and R143 each bind substrate. H266 contributes to the heme binding site. T280 is a binding site for substrate.

This sequence belongs to the tryptophan 2,3-dioxygenase family. Homotetramer. Heme is required as a cofactor.

The enzyme catalyses L-tryptophan + O2 = N-formyl-L-kynurenine. It functions in the pathway amino-acid degradation; L-tryptophan degradation via kynurenine pathway; L-kynurenine from L-tryptophan: step 1/2. Functionally, heme-dependent dioxygenase that catalyzes the oxidative cleavage of the L-tryptophan (L-Trp) pyrrole ring and converts L-tryptophan to N-formyl-L-kynurenine. Catalyzes the oxidative cleavage of the indole moiety. In Burkholderia ambifaria (strain ATCC BAA-244 / DSM 16087 / CCUG 44356 / LMG 19182 / AMMD) (Burkholderia cepacia (strain AMMD)), this protein is Tryptophan 2,3-dioxygenase.